The sequence spans 411 residues: Serine hydroxymethyltransferase (411 aa).

(6S)-5,6,7,8-tetrahydrofolate is bound by residues leucine 117 and 121–123 (GHL). At lysine 226 the chain carries N6-(pyridoxal phosphate)lysine.

The protein belongs to the SHMT family. Homodimer. Requires pyridoxal 5'-phosphate as cofactor.

It localises to the cytoplasm. The catalysed reaction is (6R)-5,10-methylene-5,6,7,8-tetrahydrofolate + glycine + H2O = (6S)-5,6,7,8-tetrahydrofolate + L-serine. Its pathway is one-carbon metabolism; tetrahydrofolate interconversion. It participates in amino-acid biosynthesis; glycine biosynthesis; glycine from L-serine: step 1/1. Functionally, catalyzes the reversible interconversion of serine and glycine with tetrahydrofolate (THF) serving as the one-carbon carrier. This reaction serves as the major source of one-carbon groups required for the biosynthesis of purines, thymidylate, methionine, and other important biomolecules. Also exhibits THF-independent aldolase activity toward beta-hydroxyamino acids, producing glycine and aldehydes, via a retro-aldol mechanism. The polypeptide is Serine hydroxymethyltransferase (Syntrophobacter fumaroxidans (strain DSM 10017 / MPOB)).